The chain runs to 233 residues: B-cell lymphoma/leukemia 10 (233 aa).

N-acetylmethionine is present on Met-1. The CARD domain maps to 13-101 (LTEVKKDALE…QSFLIQKITD (89 aa)). Glycyl lysine isopeptide (Lys-Gly) (interchain with G-Cter in ubiquitin) cross-links involve residues Lys-17, Lys-31, and Lys-63. Ser-138 bears the Phosphoserine mark. Residues 185–233 (SSFSSATLPRPGDPGAPPLPPDLRLEEGGSCGNSSEMFLPLRSRALSRQ) form a disordered region. Pro residues predominate over residues 195-205 (PGDPGAPPLPP).

As to quaternary structure, homomultimer; homooligomerized following recruitment by CARD domain-containing proteins that form a nucleating helical template that recruits BCL10 via CARD-CARD interaction. Self-associates by CARD-CARD interaction and interacts with other CARD-proteins such as CARD9, CARD10, CARD11 and CARD14. Forms a complex with CARD14 and MALT1; resulting in the formation of a CBM (CARD14-BCL10-MALT1) complex. Forms a complex with CARD11 and MALT1; resulting in the formation of a CBM (CARD11-BCL10-MALT1) complex. Forms a complex with CARD9 and MALT1; resulting in the formation of a CBM (CARD9-BCL10-MALT1) complex. Found in a membrane raft complex, at least composed of BCL10, CARD11, DPP4 and IKBKB. Binds caspase-9 with its C-terminal domain. Interacts with TRAF2 and BIRC2/c-IAP2. Interacts with PELI2 and SOCS3; these interactions may be mutually exclusive. Phosphorylated by IKBKB/IKKB. In terms of processing, ubiquitinated via both 'Lys-63'-linked and linear ('Met-1'-linked) polyubiquitin chains in response to T-cell receptor (TCR) activation. Ubiquitination is recognized by IKBKG/NEMO, the regulatory subunit of I-kappa-B kinase (IKK), and is required for TCR-induced NF-kappa-B activation. Linear ubiquitination at Lys-17, Lys-31 and Lys-63 is mediated by RNF31/HOIP; linear ubiquitination is recognized with much higher affinity than 'Lys-63'-linked ubiquitin by IKBKG/NEMO. CARD11 is required for linear ubiquitination by HOIP by promoting the targeting of BCL10 to RNF31/HOIP. Post-translationally, proteolytically cleaved by MALT1; required for T-cell activation. Highly expressed in heart, brain, spleen, lung, liver, skeletal muscle, kidney and testis. Detected in developing brain, olfactory epithelium, tongue, whisker follicles, salivary gland, heart, lung, liver and intestinal epithelia of stage 15 embryos.

It is found in the cytoplasm. It localises to the membrane raft. Its function is as follows. Plays a key role in both adaptive and innate immune signaling by bridging CARD domain-containing proteins to immune activation. Acts by channeling adaptive and innate immune signaling downstream of CARD domain-containing proteins CARD9, CARD11 and CARD14 to activate NF-kappa-B and MAP kinase p38 (MAPK11, MAPK12, MAPK13 and/or MAPK14) pathways which stimulate expression of genes encoding pro-inflammatory cytokines and chemokines. Recruited by activated CARD domain-containing proteins: homooligomerized CARD domain-containing proteins form a nucleating helical template that recruits BCL10 via CARD-CARD interaction, thereby promoting polymerization of BCL10, subsequent recruitment of MALT1 and formation of a CBM complex. This leads to activation of NF-kappa-B and MAP kinase p38 (MAPK11, MAPK12, MAPK13 and/or MAPK14) pathways which stimulate expression of genes encoding pro-inflammatory cytokines and chemokines. Activated by CARD9 downstream of C-type lectin receptors; CARD9-mediated signals are essential for antifungal immunity. Activated by CARD11 downstream of T-cell receptor (TCR) and B-cell receptor (BCR). Promotes apoptosis, pro-caspase-9 maturation and activation of NF-kappa-B via NIK and IKK. The polypeptide is B-cell lymphoma/leukemia 10 (Bcl10) (Mus musculus (Mouse)).